Consider the following 615-residue polypeptide: UvrABC system protein C (615 aa).

Positions Thr-14–Ile-91 constitute a GIY-YIG domain. The 36-residue stretch at Asn-196–Leu-231 folds into the UVR domain.

This sequence belongs to the UvrC family. In terms of assembly, interacts with UvrB in an incision complex.

The protein resides in the cytoplasm. Functionally, the UvrABC repair system catalyzes the recognition and processing of DNA lesions. UvrC both incises the 5' and 3' sides of the lesion. The N-terminal half is responsible for the 3' incision and the C-terminal half is responsible for the 5' incision. This Streptococcus pneumoniae (strain JJA) protein is UvrABC system protein C.